We begin with the raw amino-acid sequence, 170 residues long: Small ribosomal subunit protein mS25 (170 aa).

This sequence belongs to the mitochondrion-specific ribosomal protein mS25 family. As to quaternary structure, component of the mitochondrial ribosome small subunit (28S) which comprises a 12S rRNA and about 30 distinct proteins.

The protein resides in the mitochondrion. The sequence is that of Small ribosomal subunit protein mS25 (mrps-25) from Caenorhabditis elegans.